The following is a 509-amino-acid chain: ATP synthase subunit alpha (509 aa).

Residue 169–176 (GDRQTGKT) participates in ATP binding.

Belongs to the ATPase alpha/beta chains family. F-type ATPases have 2 components, CF(1) - the catalytic core - and CF(0) - the membrane proton channel. CF(1) has five subunits: alpha(3), beta(3), gamma(1), delta(1), epsilon(1). CF(0) has three main subunits: a(1), b(2) and c(9-12). The alpha and beta chains form an alternating ring which encloses part of the gamma chain. CF(1) is attached to CF(0) by a central stalk formed by the gamma and epsilon chains, while a peripheral stalk is formed by the delta and b chains.

It is found in the cell inner membrane. It catalyses the reaction ATP + H2O + 4 H(+)(in) = ADP + phosphate + 5 H(+)(out). Produces ATP from ADP in the presence of a proton gradient across the membrane. The alpha chain is a regulatory subunit. This chain is ATP synthase subunit alpha, found in Rhizobium etli (strain ATCC 51251 / DSM 11541 / JCM 21823 / NBRC 15573 / CFN 42).